Reading from the N-terminus, the 217-residue chain is Large ribosomal subunit protein uL3 (217 aa).

The segment at 129–161 (SRGPMSHGSKNHRAPGSTGAGTTPGRIYPGKRM) is disordered. Positions 142–153 (APGSTGAGTTPG) are enriched in low complexity.

Belongs to the universal ribosomal protein uL3 family. As to quaternary structure, part of the 50S ribosomal subunit. Forms a cluster with proteins L14 and L19.

In terms of biological role, one of the primary rRNA binding proteins, it binds directly near the 3'-end of the 23S rRNA, where it nucleates assembly of the 50S subunit. This is Large ribosomal subunit protein uL3 from Prochlorococcus marinus (strain MIT 9515).